The chain runs to 119 residues: Large ribosomal subunit protein bL20 (119 aa).

This sequence belongs to the bacterial ribosomal protein bL20 family.

Its function is as follows. Binds directly to 23S ribosomal RNA and is necessary for the in vitro assembly process of the 50S ribosomal subunit. It is not involved in the protein synthesizing functions of that subunit. This is Large ribosomal subunit protein bL20 from Rhodopseudomonas palustris (strain BisB18).